A 475-amino-acid polypeptide reads, in one-letter code: Nucleoporin-like protein amo1 (475 aa).

Residues M1–P25 form a C3H1-type zinc finger. Residues D165–T182 are compositionally biased toward polar residues. 2 disordered regions span residues D165–G208 and N220–G252. Residues Q183–N204 show a composition bias toward low complexity. The segment covering N220–N242 has biased composition (polar residues). Low complexity predominate over residues P243–G252.

It localises to the nucleus. Its function is as follows. Involved in the cell polarity process where it is required for the correct termination of microtubule growth at the cell ends during interphase. The chain is Nucleoporin-like protein amo1 (amo1) from Schizosaccharomyces pombe (strain 972 / ATCC 24843) (Fission yeast).